A 1409-amino-acid chain; its full sequence is DNA-directed RNA polymerase subunit beta' (1409 aa).

Residues Cys70, Cys72, Cys85, and Cys88 each coordinate Zn(2+). Mg(2+) contacts are provided by Asp458, Asp460, and Asp462. Zn(2+) contacts are provided by Cys813, Cys887, Cys894, and Cys897.

It belongs to the RNA polymerase beta' chain family. In terms of assembly, the RNAP catalytic core consists of 2 alpha, 1 beta, 1 beta' and 1 omega subunit. When a sigma factor is associated with the core the holoenzyme is formed, which can initiate transcription. Requires Mg(2+) as cofactor. The cofactor is Zn(2+).

It carries out the reaction RNA(n) + a ribonucleoside 5'-triphosphate = RNA(n+1) + diphosphate. In terms of biological role, DNA-dependent RNA polymerase catalyzes the transcription of DNA into RNA using the four ribonucleoside triphosphates as substrates. This is DNA-directed RNA polymerase subunit beta' from Delftia acidovorans (strain DSM 14801 / SPH-1).